Here is a 201-residue protein sequence, read N- to C-terminus: Large ribosomal subunit protein bL25 (201 aa).

The protein belongs to the bacterial ribosomal protein bL25 family. CTC subfamily. As to quaternary structure, part of the 50S ribosomal subunit; part of the 5S rRNA/L5/L18/L25 subcomplex. Contacts the 5S rRNA. Binds to the 5S rRNA independently of L5 and L18.

Its function is as follows. This is one of the proteins that binds to the 5S RNA in the ribosome where it forms part of the central protuberance. In Thiobacillus denitrificans (strain ATCC 25259 / T1), this protein is Large ribosomal subunit protein bL25.